Reading from the N-terminus, the 314-residue chain is Olfactory receptor 4K2 (314 aa).

Residues Met-1–Met-25 are Extracellular-facing. N-linked (GlcNAc...) asparagine glycosylation occurs at Asn-5. A helical membrane pass occupies residues Phe-26–Val-49. Topologically, residues Ile-50–Ser-57 are cytoplasmic. Residues Pro-58–Pro-79 form a helical membrane-spanning segment. Residues Lys-80 to Gln-100 are Extracellular-facing. Cys-97 and Cys-189 are joined by a disulfide. A helical membrane pass occupies residues Ile-101–Phe-120. Over Asp-121–Gln-139 the chain is Cytoplasmic. A helical membrane pass occupies residues Val-140 to Ser-158. Residues Gln-159–Leu-195 are Extracellular-facing. The helical transmembrane segment at Gly-196–Val-219 threads the bilayer. Residues Ile-220–Lys-235 are Cytoplasmic-facing. Residues Ala-236–Tyr-258 form a helical membrane-spanning segment. Over Met-259–Lys-269 the chain is Extracellular. The helical transmembrane segment at Ile-270 to Leu-289 threads the bilayer. Residues Arg-290–Ser-314 lie on the Cytoplasmic side of the membrane.

It belongs to the G-protein coupled receptor 1 family.

The protein resides in the cell membrane. Its function is as follows. Odorant receptor. In Homo sapiens (Human), this protein is Olfactory receptor 4K2 (OR4K2).